Consider the following 220-residue polypeptide: Deoxyribose-phosphate aldolase (220 aa).

The active-site Proton donor/acceptor is the Asp89. The Schiff-base intermediate with acetaldehyde role is filled by Lys151. Lys180 (proton donor/acceptor) is an active-site residue.

It belongs to the DeoC/FbaB aldolase family. DeoC type 1 subfamily.

The protein localises to the cytoplasm. It carries out the reaction 2-deoxy-D-ribose 5-phosphate = D-glyceraldehyde 3-phosphate + acetaldehyde. Its pathway is carbohydrate degradation; 2-deoxy-D-ribose 1-phosphate degradation; D-glyceraldehyde 3-phosphate and acetaldehyde from 2-deoxy-alpha-D-ribose 1-phosphate: step 2/2. In terms of biological role, catalyzes a reversible aldol reaction between acetaldehyde and D-glyceraldehyde 3-phosphate to generate 2-deoxy-D-ribose 5-phosphate. The polypeptide is Deoxyribose-phosphate aldolase (Staphylococcus epidermidis (strain ATCC 35984 / DSM 28319 / BCRC 17069 / CCUG 31568 / BM 3577 / RP62A)).